Here is a 127-residue protein sequence, read N- to C-terminus: MFSTLIFLTAVTLLMMPSQTVPAPLKDVNDIRVKGLLPLLRQRQLQIMPSQTIPALKDVNDIRVKGLLSLLRQRKQEIMPSQTIPALKDVNDIRVKGLLSLLRQRKQEECDDPDGLMCCTISEMPTC.

The first 20 residues, 1-20 (MFSTLIFLTAVTLLMMPSQT), serve as a signal peptide directing secretion. A propeptide spanning residues 42–43 (QR) is cleaved from the precursor. Gln-44 is subject to Pyrrolidone carboxylic acid. Residues 73–75 (QRK) constitute a propeptide that is removed on maturation. Gln-76 is modified (pyrrolidone carboxylic acid). The propeptide occupies 104–106 (QRK). Gln-107 carries the post-translational modification Pyrrolidone carboxylic acid.

Post-translationally, the turripeptide OL172 conotoxin-like contains 2 disulfide bonds. As to expression, expressed by the venom duct.

It is found in the secreted. Functionally, acts as a neurotoxin by inhibiting an ion channel. This Iotyrris olangoensis (Sea snail) protein is Turripeptide OL172.